Here is a 174-residue protein sequence, read N- to C-terminus: RNA pyrophosphohydrolase (174 aa).

A Nudix hydrolase domain is found at 6–149 (GYRPNVGIIL…KRDVYLEALK (144 aa)). The Nudix box motif lies at 38–59 (GGIKPGESPETAMYRELYEEVG).

Belongs to the Nudix hydrolase family. RppH subfamily. The cofactor is a divalent metal cation.

Its function is as follows. Accelerates the degradation of transcripts by removing pyrophosphate from the 5'-end of triphosphorylated RNA, leading to a more labile monophosphorylated state that can stimulate subsequent ribonuclease cleavage. In Neisseria gonorrhoeae (strain ATCC 700825 / FA 1090), this protein is RNA pyrophosphohydrolase.